The following is a 248-amino-acid chain: Histone H1, gonadal (248 aa).

Disordered stretches follow at residues 1–46 (PGSP…PPVL) and 115–248 (AVAK…KARK). Over residues 9–39 (ASPRKSPRKSPKKSPRKASASPRRKAKRARA) the composition is skewed to basic residues. The H15 domain occupies 41–115 (THPPVLEMVQ…GASGRFRVGA (75 aa)). A compositionally biased stretch (basic residues) spans 118–248 (KPKKAKKTSA…KRRSPKKARK (131 aa)).

It belongs to the histone H1/H5 family. In terms of tissue distribution, sperm.

It is found in the nucleus. The protein localises to the chromosome. Histones H1 are necessary for the condensation of nucleosome chains into higher-order structures. The sequence is that of Histone H1, gonadal from Parechinus angulosus (Angulate sea urchin).